The following is a 218-amino-acid chain: MNCRSEVLEVSVEGRQVEEAMLAVLHTVLLHRSTGKFHYKKEGTYSIGTVGIQDVDCDFIDFTYVRVSSEELDRALRKVVGEFKDALRNSGGDGLGQMSLEFYQKKKSRWPFSDECIPWEVWTVKVHVVALATEQERQICREKVGEKLCEKIINIVEVMSRHEYLPKMPTQSEVDNVFDTGLRDVQPYLYKISFQITEALGTSVTTTMRRLIKDTLAL.

Residues isoleucine 152–valine 156 form an important for interaction with ATG13 region.

Belongs to the ATG101 family. In terms of assembly, interacts with ATG13. Associates with a complex composed of ATG13, ULK1 and RB1CC1; the association with this complex requires the presence of ATG13.

It localises to the cytoplasm. It is found in the preautophagosomal structure. Its function is as follows. Autophagy factor required for autophagosome formation. Stabilizes ATG13, protecting it from proteasomal degradation. This is Autophagy-related protein 101 (Atg101) from Mus musculus (Mouse).